A 245-amino-acid chain; its full sequence is 4-hydroxy-tetrahydrodipicolinate reductase (245 aa).

NAD(+)-binding positions include 7-12, 75-77, and 102-105; these read GARGKV, GTT, and APNF. The active-site Proton donor/acceptor is the H132. Position 133 (H133) interacts with (S)-2,3,4,5-tetrahydrodipicolinate. The Proton donor role is filled by K136. Residue 142–143 coordinates (S)-2,3,4,5-tetrahydrodipicolinate; sequence GT.

The protein belongs to the DapB family.

It is found in the cytoplasm. It catalyses the reaction (S)-2,3,4,5-tetrahydrodipicolinate + NAD(+) + H2O = (2S,4S)-4-hydroxy-2,3,4,5-tetrahydrodipicolinate + NADH + H(+). The catalysed reaction is (S)-2,3,4,5-tetrahydrodipicolinate + NADP(+) + H2O = (2S,4S)-4-hydroxy-2,3,4,5-tetrahydrodipicolinate + NADPH + H(+). Its pathway is amino-acid biosynthesis; L-lysine biosynthesis via DAP pathway; (S)-tetrahydrodipicolinate from L-aspartate: step 4/4. Its function is as follows. Catalyzes the conversion of 4-hydroxy-tetrahydrodipicolinate (HTPA) to tetrahydrodipicolinate. In Mycolicibacterium vanbaalenii (strain DSM 7251 / JCM 13017 / BCRC 16820 / KCTC 9966 / NRRL B-24157 / PYR-1) (Mycobacterium vanbaalenii), this protein is 4-hydroxy-tetrahydrodipicolinate reductase.